A 221-amino-acid chain; its full sequence is Chalcone--flavanone isomerase (221 aa).

Residues Thr50, Asn115, and Thr192 each coordinate substrate.

The protein belongs to the chalcone isomerase family.

It catalyses the reaction a chalcone = a flavanone.. It functions in the pathway secondary metabolite biosynthesis; flavonoid biosynthesis. Functionally, catalyzes the intramolecular cyclization of bicyclic chalcones into tricyclic (S)-flavanones. Responsible for the isomerization of 4,2',4',6'-tetrahydroxychalcone (also termed chalcone) into naringenin. The sequence is that of Chalcone--flavanone isomerase (CHI) from Phaseolus vulgaris (Kidney bean).